The sequence spans 214 residues: Heat shock protein 30 (214 aa).

The 118-residue stretch at 66–183 folds into the sHSP domain; the sequence is VPSSLTIQPV…AERVVPINCS (118 aa). The segment at 193–214 is disordered; the sequence is SKTEGSITDTQKKQENTISKED. Positions 202–214 are enriched in basic and acidic residues; it reads TQKKQENTISKED.

Belongs to the small heat shock protein (HSP20) family.

The polypeptide is Heat shock protein 30 (hsp30) (Oncorhynchus tshawytscha (Chinook salmon)).